The sequence spans 419 residues: S-adenosylmethionine synthase (419 aa).

His-15 serves as a coordination point for ATP. Asp-17 serves as a coordination point for Mg(2+). A K(+)-binding site is contributed by Glu-43. L-methionine-binding residues include Glu-56 and Gln-100. The segment at 100-110 (QSPDIAQGVDE) is flexible loop. ATP is bound by residues 171 to 173 (DGK), 248 to 249 (KF), Asp-257, 263 to 264 (RK), Ala-280, and Lys-284. Asp-257 contacts L-methionine. Lys-288 contacts L-methionine.

Belongs to the AdoMet synthase family. As to quaternary structure, homotetramer; dimer of dimers. The cofactor is Mg(2+). Requires K(+) as cofactor.

The protein resides in the cytoplasm. The catalysed reaction is L-methionine + ATP + H2O = S-adenosyl-L-methionine + phosphate + diphosphate. It participates in amino-acid biosynthesis; S-adenosyl-L-methionine biosynthesis; S-adenosyl-L-methionine from L-methionine: step 1/1. Catalyzes the formation of S-adenosylmethionine (AdoMet) from methionine and ATP. The overall synthetic reaction is composed of two sequential steps, AdoMet formation and the subsequent tripolyphosphate hydrolysis which occurs prior to release of AdoMet from the enzyme. This Parasynechococcus marenigrum (strain WH8102) protein is S-adenosylmethionine synthase.